A 285-amino-acid polypeptide reads, in one-letter code: CCR4-NOT transcription complex subunit 7 (285 aa).

5 residues coordinate a divalent metal cation: Asp40, Glu42, Asp161, Asp230, and Glu278.

It belongs to the CAF1 family. As to quaternary structure, component of the CCR4-NOT complex. It depends on Mn(2+) as a cofactor. Requires Mg(2+) as cofactor. Co(2+) is required as a cofactor.

The protein resides in the nucleus. The protein localises to the cytoplasm. It carries out the reaction Exonucleolytic cleavage of poly(A) to 5'-AMP.. Its function is as follows. Has 3'-5' poly(A) exoribonuclease activity for synthetic poly(A) RNA substrate. Catalytic component of the CCR4-NOT complex which is one of the major cellular mRNA deadenylases and is linked to various cellular processes including bulk mRNA degradation, miRNA-mediated repression, translational repression during translational initiation and general transcription regulation. During miRNA-mediated repression the complex also seems to act as translational repressor during translational initiation. Additional complex functions may be a consequence of its influence on mRNA expression. This is CCR4-NOT transcription complex subunit 7 (cnot7) from Xenopus tropicalis (Western clawed frog).